We begin with the raw amino-acid sequence, 354 residues long: Peptide chain release factor 1 (354 aa).

Gln-233 is subject to N5-methylglutamine.

The protein belongs to the prokaryotic/mitochondrial release factor family. In terms of processing, methylated by PrmC. Methylation increases the termination efficiency of RF1.

It localises to the cytoplasm. In terms of biological role, peptide chain release factor 1 directs the termination of translation in response to the peptide chain termination codons UAG and UAA. The protein is Peptide chain release factor 1 of Clostridioides difficile (strain 630) (Peptoclostridium difficile).